Consider the following 397-residue polypeptide: Acetate kinase 2 (397 aa).

Residue asparagine 10 coordinates Mg(2+). An ATP-binding site is contributed by lysine 17. Residue arginine 90 participates in substrate binding. Catalysis depends on aspartate 147, which acts as the Proton donor/acceptor. Residues 207 to 211 (HLGNG), 281 to 283 (DAR), and 329 to 333 (GIGEN) contribute to the ATP site. Glutamate 385 is a Mg(2+) binding site.

The protein belongs to the acetokinase family. In terms of assembly, homodimer. Requires Mg(2+) as cofactor. Mn(2+) serves as cofactor.

It is found in the cytoplasm. The enzyme catalyses acetate + ATP = acetyl phosphate + ADP. Its pathway is metabolic intermediate biosynthesis; acetyl-CoA biosynthesis; acetyl-CoA from acetate: step 1/2. In terms of biological role, catalyzes the formation of acetyl phosphate from acetate and ATP. Can also catalyze the reverse reaction. This is Acetate kinase 2 from Vibrio cholerae serotype O1 (strain ATCC 39315 / El Tor Inaba N16961).